Reading from the N-terminus, the 408-residue chain is Interferon-activable protein 203 (408 aa).

The Pyrin domain occupies 1–87 (MAEYKNIVLL…AKKLKTEKAK (87 aa)). Residues 84-208 (EKAKVQEKKK…EGHHQGPKQV (125 aa)) form a disordered region. The span at 92-102 (KKGKCKTAGKK) shows a compositional bias: basic residues. Positions 150–159 (AQLPETSGTN) are enriched in polar residues. The HIN-200 domain maps to 190 to 388 (TVPKEPSREE…SVRHSYMQVI (199 aa)).

Belongs to the HIN-200 family. As to expression, constitutively expressed in the thymus, bone marrow and spleen. Isoform 1 and isoform 3 are present in liver (at protein level).

The protein resides in the nucleus. This chain is Interferon-activable protein 203 (Ifi203), found in Mus musculus (Mouse).